The primary structure comprises 1331 residues: DNA-directed RNA polymerase subunit beta' (1331 aa).

Zn(2+) contacts are provided by C220, C293, C300, and C303. Disordered stretches follow at residues 1236-1257 and 1294-1331; these read DFVD…TNDN and ISGD…MKDQ. Positions 1243-1257 are enriched in polar residues; that stretch reads SRSPNGYSNVVTNDN.

This sequence belongs to the RNA polymerase beta' chain family. RpoC2 subfamily. In terms of assembly, in cyanobacteria the RNAP catalytic core is composed of 2 alpha, 1 beta, 1 beta', 1 gamma and 1 omega subunit. When a sigma factor is associated with the core the holoenzyme is formed, which can initiate transcription. Requires Zn(2+) as cofactor.

The enzyme catalyses RNA(n) + a ribonucleoside 5'-triphosphate = RNA(n+1) + diphosphate. DNA-dependent RNA polymerase catalyzes the transcription of DNA into RNA using the four ribonucleoside triphosphates as substrates. The polypeptide is DNA-directed RNA polymerase subunit beta' (Picosynechococcus sp. (strain ATCC 27264 / PCC 7002 / PR-6) (Agmenellum quadruplicatum)).